Consider the following 196-residue polypeptide: Fe/S biogenesis protein NfuA (196 aa).

[4Fe-4S] cluster is bound by residues Cys-154 and Cys-157.

The protein belongs to the NfuA family. Homodimer. The cofactor is [4Fe-4S] cluster.

Involved in iron-sulfur cluster biogenesis. Binds a 4Fe-4S cluster, can transfer this cluster to apoproteins, and thereby intervenes in the maturation of Fe/S proteins. Could also act as a scaffold/chaperone for damaged Fe/S proteins. The protein is Fe/S biogenesis protein NfuA of Blochmanniella pennsylvanica (strain BPEN).